Reading from the N-terminus, the 459-residue chain is DNA-binding protein P3A2 (459 aa).

A disordered region spans residues 1–25; it reads MMISEDISEPSSPDTPFDDSDLLNS.

It belongs to the NRF1/Ewg family.

It localises to the nucleus. Transcriptional regulator that interacts with specific sites in the control region of the cyIIIa actin gene. Also binds specifically to similar target sites located in the regulatory region of the SM50 gene. The chain is DNA-binding protein P3A2 from Strongylocentrotus purpuratus (Purple sea urchin).